We begin with the raw amino-acid sequence, 331 residues long: Ketol-acid reductoisomerase (NADP(+)) (331 aa).

The KARI N-terminal Rossmann domain occupies 2–182; the sequence is VEIYYDDDAN…GGTRAGALRT (181 aa). NADP(+) is bound by residues 25–28, S51, and S53; that span reads FGSQ. Residue H108 is part of the active site. NADP(+) is bound at residue G134. Residues 183–328 form the KARI C-terminal knotted domain; the sequence is TFTEETETDL…GKLRPMMSWI (146 aa). Positions 191, 195, 227, and 231 each coordinate Mg(2+). S252 serves as a coordination point for substrate.

Belongs to the ketol-acid reductoisomerase family. The cofactor is Mg(2+).

It carries out the reaction (2R)-2,3-dihydroxy-3-methylbutanoate + NADP(+) = (2S)-2-acetolactate + NADPH + H(+). The catalysed reaction is (2R,3R)-2,3-dihydroxy-3-methylpentanoate + NADP(+) = (S)-2-ethyl-2-hydroxy-3-oxobutanoate + NADPH + H(+). Its pathway is amino-acid biosynthesis; L-isoleucine biosynthesis; L-isoleucine from 2-oxobutanoate: step 2/4. It participates in amino-acid biosynthesis; L-valine biosynthesis; L-valine from pyruvate: step 2/4. In terms of biological role, involved in the biosynthesis of branched-chain amino acids (BCAA). Catalyzes an alkyl-migration followed by a ketol-acid reduction of (S)-2-acetolactate (S2AL) to yield (R)-2,3-dihydroxy-isovalerate. In the isomerase reaction, S2AL is rearranged via a Mg-dependent methyl migration to produce 3-hydroxy-3-methyl-2-ketobutyrate (HMKB). In the reductase reaction, this 2-ketoacid undergoes a metal-dependent reduction by NADPH to yield (R)-2,3-dihydroxy-isovalerate. This chain is Ketol-acid reductoisomerase (NADP(+)), found in Parafrankia sp. (strain EAN1pec).